The primary structure comprises 444 residues: Probable glycine dehydrogenase (decarboxylating) subunit 1 (444 aa).

This sequence belongs to the GcvP family. N-terminal subunit subfamily. In terms of assembly, the glycine cleavage system is composed of four proteins: P, T, L and H. In this organism, the P 'protein' is a heterodimer of two subunits.

The enzyme catalyses N(6)-[(R)-lipoyl]-L-lysyl-[glycine-cleavage complex H protein] + glycine + H(+) = N(6)-[(R)-S(8)-aminomethyldihydrolipoyl]-L-lysyl-[glycine-cleavage complex H protein] + CO2. Its function is as follows. The glycine cleavage system catalyzes the degradation of glycine. The P protein binds the alpha-amino group of glycine through its pyridoxal phosphate cofactor; CO(2) is released and the remaining methylamine moiety is then transferred to the lipoamide cofactor of the H protein. In Chlorobaculum tepidum (strain ATCC 49652 / DSM 12025 / NBRC 103806 / TLS) (Chlorobium tepidum), this protein is Probable glycine dehydrogenase (decarboxylating) subunit 1.